A 585-amino-acid chain; its full sequence is Serine protease HtrA-like (585 aa).

The interval 1-184 (MDNNKKQVIP…QPKDKDNDNT (184 aa)) is disordered. Residues 21-82 (YFHNVEREER…IHQQRDDKSY (62 aa)) are compositionally biased toward basic and acidic residues. Over residues 84-94 (QKTLNQNNQMN) the composition is skewed to polar residues. The span at 95–113 (KSKDDDNKIGEESLHDVRV) shows a compositional bias: basic and acidic residues. The segment covering 114 to 124 (SSDTSTLPHQN) has biased composition (polar residues). A compositionally biased stretch (basic and acidic residues) spans 126 to 139 (SIKDYDDSGNESKQ). The span at 151-175 (GVNSNHTEQDSRSTQPYSSKHSYSQ) shows a compositional bias: polar residues. A helical transmembrane segment spans residues 224–244 (MLIIIGIIVLLLILNAIFTTV). Residues His320, Asp350, and Ser435 each act as charge relay system in the active site. One can recognise a PDZ domain in the interval 516–575 (GVLIGEVKENGLGDKAGLKKGDVIVELDGKKIEDNLRYRQVIYSHYDDQKTITAKIYRNG).

It belongs to the peptidase S1C family.

Its subcellular location is the cell membrane. The sequence is that of Serine protease HtrA-like from Staphylococcus epidermidis (strain ATCC 35984 / DSM 28319 / BCRC 17069 / CCUG 31568 / BM 3577 / RP62A).